Here is a 291-residue protein sequence, read N- to C-terminus: Elongation factor Ts (291 aa).

The tract at residues 79-82 (TDFV) is involved in Mg(2+) ion dislocation from EF-Tu.

This sequence belongs to the EF-Ts family.

Its subcellular location is the cytoplasm. Functionally, associates with the EF-Tu.GDP complex and induces the exchange of GDP to GTP. It remains bound to the aminoacyl-tRNA.EF-Tu.GTP complex up to the GTP hydrolysis stage on the ribosome. This is Elongation factor Ts from Leuconostoc mesenteroides subsp. mesenteroides (strain ATCC 8293 / DSM 20343 / BCRC 11652 / CCM 1803 / JCM 6124 / NCDO 523 / NBRC 100496 / NCIMB 8023 / NCTC 12954 / NRRL B-1118 / 37Y).